Consider the following 956-residue polypeptide: Lon protease homolog, mitochondrial 1 (956 aa).

Disordered stretches follow at residues 37 to 57 and 83 to 123; these read NNNNNNNNNNNNNNNNNNNNN and KKKG…GNEK. Basic and acidic residues predominate over residues 91–123; it reads NNDDNDNEKNEKNEKKVKNEKKEKNEKNDGNEK. The region spanning 159-357 is the Lon N-terminal domain; it reads VVIYPSNSVN…MLYHMILNEQ (199 aa). 511-518 provides a ligand contact to ATP; that stretch reads GPPGTGKT. Residues 747-945 form the Lon proteolytic domain; the sequence is VTPIGVVNGL…KDVFEVAFPN (199 aa). A compositionally biased stretch (low complexity) spans 777–795; sequence KPLSSLPPSQQQQNQLEPS. Residues 777–800 are disordered; it reads KPLSSLPPSQQQQNQLEPSIKTTG. Catalysis depends on residues serine 851 and lysine 894.

This sequence belongs to the peptidase S16 family. In terms of assembly, homohexamer or homoheptamer. Organized in a ring with a central cavity.

It localises to the mitochondrion matrix. It carries out the reaction Hydrolysis of proteins in presence of ATP.. In terms of biological role, ATP-dependent serine protease that mediates the selective degradation of misfolded, unassembled or oxidatively damaged polypeptides as well as certain short-lived regulatory proteins in the mitochondrial matrix. May also have a chaperone function in the assembly of inner membrane protein complexes. Participates in the regulation of mitochondrial gene expression and in the maintenance of the integrity of the mitochondrial genome. Binds to mitochondrial DNA in a site-specific manner. This Dictyostelium discoideum (Social amoeba) protein is Lon protease homolog, mitochondrial 1.